A 474-amino-acid polypeptide reads, in one-letter code: Cysteine protease ATG4A (474 aa).

Residues 1-32 form a disordered region; the sequence is MTSLPGRGVSPSSSDPLCEGNAAPSSSSSSGQ. Cys161 serves as the catalytic Nucleophile. Catalysis depends on residues Asp358 and His360. The span at 439–449 shows a compositional bias: polar residues; the sequence is KQMYNEESSSG. The tract at residues 439–474 is disordered; that stretch reads KQMYNEESSSGDGMDSINVEGLDGSGETGEEEWQIL.

It belongs to the peptidase C54 family. Interacts with ATG8.

The protein localises to the cytoplasm. The catalysed reaction is [protein]-C-terminal L-amino acid-glycyl-phosphatidylethanolamide + H2O = [protein]-C-terminal L-amino acid-glycine + a 1,2-diacyl-sn-glycero-3-phosphoethanolamine. Functionally, cysteine protease that plays a key role in autophagy by mediating both proteolytic activation and delipidation of ATG8 family proteins. The protease activity is required for proteolytic activation of ATG8 family proteins: cleaves the C-terminal amino acid of ATG8 proteins to reveal a C-terminal glycine. Exposure of the glycine at the C-terminus is essential for ATG8 proteins conjugation to phosphatidylethanolamine (PE) and insertion to membranes, which is necessary for autophagy. In addition to the protease activity, also mediates delipidation of PE-conjugated ATG8 proteins. The protein is Cysteine protease ATG4A (ATG4A) of Oryza sativa subsp. japonica (Rice).